We begin with the raw amino-acid sequence, 356 residues long: Vesicular integral-membrane protein VIP36 (356 aa).

The N-terminal stretch at 1–44 (MAAEGWIWRWGWGRRCLGRPGLLGPGPGPTTPLFLLLLLGSVTA) is a signal peptide. Over 45–322 (DITDGNSEHL…FRSGPLTGWR (278 aa)) the chain is Lumenal. An L-type lectin-like domain is found at 52–276 (EHLKREHSLI…DIISMKLFQL (225 aa)). The a carbohydrate site is built by Ser-96 and Asp-131. Residues Asp-162, Tyr-164, and Asn-166 each coordinate Ca(2+). A carbohydrate is bound at residue 164-166 (YPN). N-linked (GlcNAc...) asparagine glycosylation occurs at Asn-183. His-190 serves as a coordination point for a carbohydrate. Asp-193 contributes to the Ca(2+) binding site. The cysteines at positions 202 and 239 are disulfide-linked. 260–262 (GDL) is an a carbohydrate binding site. Residues 323 to 345 (VFLLLLCALLGIVVCAVVGAVVF) traverse the membrane as a helical segment. The Cytoplasmic portion of the chain corresponds to 346 to 356 (QKRQERNKRFY).

Ca(2+) is required as a cofactor. In terms of tissue distribution, ubiquitous.

It is found in the endoplasmic reticulum-Golgi intermediate compartment membrane. It localises to the golgi apparatus membrane. Its subcellular location is the endoplasmic reticulum membrane. In terms of biological role, plays a role as an intracellular lectin in the early secretory pathway. Interacts with N-acetyl-D-galactosamine and high-mannose type glycans and may also bind to O-linked glycans. Involved in the transport and sorting of glycoproteins carrying high mannose-type glycans. The polypeptide is Vesicular integral-membrane protein VIP36 (LMAN2) (Homo sapiens (Human)).